Here is a 388-residue protein sequence, read N- to C-terminus: F-box protein At4g00893 (388 aa).

Residues 1–30 (MLPSPSVHMASPPPSLNMASHPPSPATASR) are disordered. One can recognise an F-box domain in the interval 42–88 (NPSFADLPSSLIEEIMLLLVLKDNIRASAACKSWYEAGVSVRVVDKH).

The sequence is that of F-box protein At4g00893 from Arabidopsis thaliana (Mouse-ear cress).